We begin with the raw amino-acid sequence, 603 residues long: uncharacterized protein (603 aa).

In terms of domain architecture, Ubiquitin-like spans 4-79 (YRIRVTTVDQ…VTFHLVIAVF (76 aa)). Disordered regions lie at residues 85–121 (TLPS…PEEL), 159–178 (SLPT…NSVS), and 206–348 (AQES…NQPF). Polar residues-rich tracts occupy residues 94–117 (VPQS…TSLN) and 162–178 (THEQ…NSVS). Positions 219–231 (SSSSAPLASDQSP) are enriched in low complexity. Polar residues predominate over residues 246-264 (LGSNSGLNPRSPNSFSSPL). The segment covering 280-289 (SLSPLSNSSS) has biased composition (low complexity). Residues 290–314 (INQVHQNETHGSTISVPNPNLSQMG) are compositionally biased toward polar residues. The span at 315 to 329 (PSHSSSVPSNLSPNP) shows a compositional bias: low complexity. Over residues 330 to 348 (AQNENPSTTSIPSINNQPF) the composition is skewed to polar residues. The chain crosses the membrane as a helical span at residues 496 to 516 (ILLTSIMSVVFLLQTGALAPF). The segment at 544 to 578 (TAQRVVEIPNETQTEDEQDGTNTPDNRADAEEREL) is disordered. Thr566 is modified (phosphothreonine). Over residues 569–578 (NRADAEEREL) the composition is skewed to basic and acidic residues.

Its subcellular location is the endoplasmic reticulum membrane. This is an uncharacterized protein from Schizosaccharomyces pombe (strain 972 / ATCC 24843) (Fission yeast).